The sequence spans 133 residues: Holo-[acyl-carrier-protein] synthase (133 aa).

The Mg(2+) site is built by D8 and E57.

Belongs to the P-Pant transferase superfamily. AcpS family. Mg(2+) is required as a cofactor.

Its subcellular location is the cytoplasm. The catalysed reaction is apo-[ACP] + CoA = holo-[ACP] + adenosine 3',5'-bisphosphate + H(+). In terms of biological role, transfers the 4'-phosphopantetheine moiety from coenzyme A to a Ser of acyl-carrier-protein. This is Holo-[acyl-carrier-protein] synthase from Bartonella quintana (strain Toulouse) (Rochalimaea quintana).